A 968-amino-acid chain; its full sequence is RNA polymerase-associated protein RapA (968 aa).

A Helicase ATP-binding domain is found at 163 to 332; it reads EVGRRYAPRV…FARLRLLDPD (170 aa). 176 to 183 provides a ligand contact to ATP; it reads DEVGLGKT. The short motif at 278 to 281 is the DEAH box element; it reads DEAH. Residues 491 to 655 enclose the Helicase C-terminal domain; sequence RVDWLIEFLK…EFAEDLLNVL (165 aa).

The protein belongs to the SNF2/RAD54 helicase family. RapA subfamily. In terms of assembly, interacts with the RNAP. Has a higher affinity for the core RNAP than for the holoenzyme. Its ATPase activity is stimulated by binding to RNAP.

In terms of biological role, transcription regulator that activates transcription by stimulating RNA polymerase (RNAP) recycling in case of stress conditions such as supercoiled DNA or high salt concentrations. Probably acts by releasing the RNAP, when it is trapped or immobilized on tightly supercoiled DNA. Does not activate transcription on linear DNA. Probably not involved in DNA repair. The chain is RNA polymerase-associated protein RapA from Shewanella sp. (strain ANA-3).